A 379-amino-acid chain; its full sequence is Cytochrome b (379 aa).

4 consecutive transmembrane segments (helical) span residues 33-53 (FGSLLGLCLIIQIASGLFLDM), 77-98 (WLIRYIHANGASLFFVCLYLHI), 113-133 (WNIGIILLFLTMATAFMGYVL), and 178-198 (FFAFHFILPFIIAAMAMVHLL). Residues His-83 and His-97 each coordinate heme b. 2 residues coordinate heme b: His-182 and His-196. His-201 contributes to the a ubiquinone binding site. 4 consecutive transmembrane segments (helical) span residues 226–246 (TKDFLGIVLLLTFFFTMVPFF), 288–308 (LGGVIALILSILILALLPHIQ), 320–340 (ISQFLFWLLVSDVLVLTWIGG), and 347–367 (FIIIGQIASLSYFTIILVLMP).

Belongs to the cytochrome b family. The cytochrome bc1 complex contains 11 subunits: 3 respiratory subunits (MT-CYB, CYC1 and UQCRFS1), 2 core proteins (UQCRC1 and UQCRC2) and 6 low-molecular weight proteins (UQCRH/QCR6, UQCRB/QCR7, UQCRQ/QCR8, UQCR10/QCR9, UQCR11/QCR10 and a cleavage product of UQCRFS1). This cytochrome bc1 complex then forms a dimer. Requires heme b as cofactor.

Its subcellular location is the mitochondrion inner membrane. In terms of biological role, component of the ubiquinol-cytochrome c reductase complex (complex III or cytochrome b-c1 complex) that is part of the mitochondrial respiratory chain. The b-c1 complex mediates electron transfer from ubiquinol to cytochrome c. Contributes to the generation of a proton gradient across the mitochondrial membrane that is then used for ATP synthesis. This chain is Cytochrome b (MT-CYB), found in Dipodomys nelsoni (Nelson's kangaroo rat).